Reading from the N-terminus, the 647-residue chain is Putative ferric-chelate reductase 1 homolog (647 aa).

A helical transmembrane segment spans residues 10–30 (WLATLVTALLAVAIWPDPGQS). The Reelin domain maps to 25 to 195 (PDPGQSLPQG…AAPPLPTQSP (171 aa)). N-linked (GlcNAc...) asparagine glycans are attached at residues asparagine 127 and asparagine 158. The DOMON domain maps to 245-368 (TKSCTSITVV…GKYHLLVASG (124 aa)). Residues 372–570 (KENSVGYHDI…HLIFSIGGMA (199 aa)) form the Cytochrome b561 domain. Residues 408-428 (LHGAFMIAAWIGTTSLGIIFA) form a helical membrane-spanning segment. Heme b-binding residues include histidine 409 and histidine 450. The next 5 membrane-spanning stretches (helical) occupy residues 452-472 (LLMVTTWSLTVAAYVLIWVEL), 480-500 (HSIIGLITVILCFIQPIGALF), 515-535 (GHWLGGNLAHILGIVTIFFSV), 548-568 (WILVSFVVVHVLVHLIFSIGG), and 616-636 (LLGVYGVVLILFVTVLILLVV). Residues histidine 480 and histidine 516 each coordinate heme b.

This sequence belongs to the FRRS1 family. The cofactor is heme b.

It is found in the membrane. Putative ferric-chelate reductases reduce Fe(3+) to Fe(2+) before its transport from the endosome to the cytoplasm. This Drosophila melanogaster (Fruit fly) protein is Putative ferric-chelate reductase 1 homolog.